The chain runs to 5125 residues: Usherin (5125 aa).

An N-terminal signal peptide occupies residues 1-33 (MYYLALSSGFLGQAIKTSILAYLASVLLAASQG). N-linked (GlcNAc...) asparagine glycans are attached at residues Asn120, Asn229, Asn257, Asn273, Asn414, Asn447, and Asn468. The region spanning 273 to 513 (NVSLTNREIL…AVDEITIIGR (241 aa)) is the Laminin N-terminal domain. Intrachain disulfides connect Cys514/Cys523, Cys516/Cys532, Cys534/Cys545, Cys548/Cys568, Cys571/Cys580, Cys573/Cys601, Cys604/Cys613, Cys616/Cys634, Cys637/Cys651, Cys639/Cys658, Cys660/Cys669, Cys672/Cys687, Cys690/Cys704, Cys692/Cys711, Cys713/Cys722, Cys725/Cys740, Cys743/Cys755, Cys745/Cys762, Cys764/Cys773, Cys776/Cys788, Cys791/Cys804, Cys793/Cys811, Cys813/Cys822, Cys825/Cys840, Cys843/Cys857, Cys845/Cys864, Cys866/Cys875, Cys878/Cys893, Cys896/Cys909, Cys898/Cys916, Cys918/Cys927, Cys930/Cys944, Cys947/Cys959, Cys949/Cys966, Cys981/Cys995, Cys998/Cys1010, Cys1000/Cys1017, Cys1019/Cys1028, and Cys1031/Cys1046. Laminin EGF-like domains are found at residues 514 to 570 (CQCH…NCKP), 571 to 636 (CQCH…VCKH), 637 to 689 (CDCN…CCRP), 690 to 742 (CDCN…GCEP), 743 to 790 (CHCN…ACEV), 791 to 842 (CDCN…LCLP), 843 to 895 (CNCE…GCQA), 896 to 946 (CDCD…GCLP), 947 to 997 (CLCH…RCRP), and 998 to 1048 (CHCH…ACSK). N-linked (GlcNAc...) asparagine glycosylation occurs at Asn646. Residues Asn835 and Asn852 are each glycosylated (N-linked (GlcNAc...) asparagine). The N-linked (GlcNAc...) asparagine glycan is linked to Asn884. N-linked (GlcNAc...) asparagine glycosylation occurs at Asn940. The N-linked (GlcNAc...) asparagine glycan is linked to Asn1007. Fibronectin type-III domains lie at 1054-1142 (PPPR…TKPE), 1146-1240 (GHLN…APPQ), 1241-1356 (RQEP…SAPV), and 1357-1461 (FMAA…AAPA). Asn1067, Asn1149, Asn1170, Asn1221, Asn1304, and Asn1381 each carry an N-linked (GlcNAc...) asparagine glycan. Laminin G-like domains follow at residues 1510-1697 (TKGT…WEGC) and 1702-1879 (EEGV…QDGC). 2 disulfides stabilise this stretch: Cys1660–Cys1697 and Cys1850–Cys1879. Fibronectin type-III domains are found at residues 1857 to 1943 (TRGA…SAPH), 1945 to 2042 (VPTP…TPQE), 2043 to 2132 (APQE…LPPE), 2133 to 2230 (RVDP…TVPE), 2231 to 2318 (GVPA…APPE), 2319 to 2421 (GTVN…MPPG), 2425 to 2519 (GLLS…TTED), 2520 to 2613 (KPGP…TPEG), 2614 to 2709 (IPGP…TRPS), 2713 to 2806 (GVQP…THPA), 2807 to 2910 (LPQE…TLAG), 2914 to 3005 (RGAT…TWEE), 3009 to 3099 (GMRP…TPSG), 3380 to 3485 (ATEE…TRED), 3486 to 3577 (VPQG…TRGV), 3580 to 3670 (SVPP…AAPQ), 3672 to 3762 (VWVT…TPED), 3765 to 3852 (PPCN…TLEA), 3853 to 3950 (APVG…TLEA), 3951 to 4054 (PPQD…SAPS), 4055 to 4143 (GLMN…APPD), 4144 to 4251 (SQMA…APPD), 4252 to 4344 (GLSP…ASPA), 4345 to 4432 (GVSP…APPE), 4433 to 4517 (DMDP…TSPS), 4518 to 4620 (APSG…IPPL), 4625 to 4720 (PHLE…TGPA), 4721 to 4813 (PPEG…THPA), and 4814 to 4916 (PPSG…TKKE). Residues 1930–1950 (SDWSRGRTLGSAPHSVPTPSR) are disordered.

As to quaternary structure, interacts with collagen IV and fibronectin via its laminin EGF-like domains. Interaction with collagen may be required for stable integration into the basement membrane. Interacts with NINL. Interacts with USH1C. Interacts (via the cytoplasmic region) with PDZD7. Component of USH2 complex, composed of ADGRV1, PDZD7, USH2A and WHRN. Interacts with ADGRV1/MASS1 (via N-terminal PDZ domain). Interacts (via the cytoplasmic region) with WHRN. Interacts (via the cytoplasmic region) with VEZT and MYO7A (via MyTH4-FERM domains); the interaction associates VEZT with the USH2 complex at the stereocilia base. In terms of tissue distribution, present in the synaptic terminals of inner ear hair cells (at protein level). Predominantly expressed in the retina and cochlea. Weakly expressed in brain and kidney. Detectable from E17 in the neural epithelium, but not in the retinal pigment epithelium (RPE) of the developing retina. After birth, it is expressed at P7 and remains expressed during adulthood.

The protein localises to the secreted. Its subcellular location is the cell projection. It is found in the stereocilium membrane. It localises to the photoreceptor inner segment. In terms of biological role, involved in hearing and vision as member of the USH2 complex. In the inner ear, required for the hair bundle ankle formation, which connects growing stereocilia in developing cochlear hair cells. In retina photoreceptors, the USH2 complex is required for the maintenance of periciliary membrane complex that seems to play a role in regulating intracellular protein transport. This is Usherin (Ush2a) from Rattus norvegicus (Rat).